A 142-amino-acid chain; its full sequence is Putative pre-16S rRNA nuclease (142 aa).

Belongs to the YqgF nuclease family.

The protein localises to the cytoplasm. Its function is as follows. Could be a nuclease involved in processing of the 5'-end of pre-16S rRNA. The protein is Putative pre-16S rRNA nuclease of Nitratidesulfovibrio vulgaris (strain DP4) (Desulfovibrio vulgaris).